Reading from the N-terminus, the 502-residue chain is Maturase K (502 aa).

Belongs to the intron maturase 2 family. MatK subfamily.

It is found in the plastid. The protein resides in the chloroplast. In terms of biological role, usually encoded in the trnK tRNA gene intron. Probably assists in splicing its own and other chloroplast group II introns. The chain is Maturase K from Vaccinium vitis-idaea (Mountain cranberry).